The following is a 611-amino-acid chain: MAU2 chromatid cohesion factor homolog (611 aa).

TPR repeat units lie at residues 11-46, 91-124, 131-164, 371-404, and 490-523; these read YAGL…NPPP, FEAS…TSGE, FRLF…AEQC, PILH…ADNP, and ACSL…SGKI. The disordered stretch occupies residues 581–611; the sequence is WTGAVSPTKSSTIPPQQSFQTWSQPGPSRLS. The segment covering 585–611 has biased composition (polar residues); the sequence is VSPTKSSTIPPQQSFQTWSQPGPSRLS.

The protein belongs to the SCC4/mau-2 family. In terms of assembly, component of the cohesin loading complex.

It is found in the nucleus. The protein resides in the nucleoplasm. In terms of biological role, required for association of the cohesin complex with chromatin during interphase. Plays a role in sister chromatid cohesion and normal progression through prometaphase. This chain is MAU2 chromatid cohesion factor homolog, found in Nematostella vectensis (Starlet sea anemone).